A 312-amino-acid polypeptide reads, in one-letter code: Olfactory receptor 1D5 (312 aa).

The Extracellular portion of the chain corresponds to 1–25 (MDGDNQSENSQFLLLGISESPEQQR). A glycan (N-linked (GlcNAc...) asparagine) is linked at N5. A helical transmembrane segment spans residues 26–49 (ILFWMFLSMYLVTVLGNVLIILAI). Over 50–57 (SSDSHLHT) the chain is Cytoplasmic. A helical membrane pass occupies residues 58 to 79 (PMYFFLANLSFTDLFFVTNTIP). The Extracellular portion of the chain corresponds to 80 to 100 (KMLVNFQSQNKAISYAGCLTQ). The cysteines at positions 97 and 189 are disulfide-linked. A helical transmembrane segment spans residues 101-120 (LYFLVSLVTLDNLILAVMAY). The Cytoplasmic portion of the chain corresponds to 121–140 (DRYVATCCPLHYVTAMSPGL). The chain crosses the membrane as a helical span at residues 141-158 (CVLLLSLCWGLSVLYGLL). At 159–196 (LTFLLTRVTFCGPREIHYLFCDMYILLWLACSNTHIIH) the chain is on the extracellular side. Residues 197-220 (TALIATGCFIFLTPLGFMTTSYVR) form a helical membrane-spanning segment. Over 221 to 237 (IVRTILQMPSASKKYKT) the chain is Cytoplasmic. A helical transmembrane segment spans residues 238-260 (FSTCASHLGVVSLFYGTLAMVYL). Over 261-271 (QPLHTYSMKDS) the chain is Extracellular. Residues 272–291 (VATVMYAVLTPMMNPFIYRL) form a helical membrane-spanning segment. Topologically, residues 292 to 312 (RNKDMHGAPGRVLWRPFQRPK) are cytoplasmic.

Belongs to the G-protein coupled receptor 1 family.

Its subcellular location is the cell membrane. Odorant receptor. The polypeptide is Olfactory receptor 1D5 (OR1D5) (Homo sapiens (Human)).